A 331-amino-acid polypeptide reads, in one-letter code: Mitochondrial respiration co-chaperone MRJ1 (331 aa).

The transit peptide at 1 to 36 (MLSFQATVRPLAVSSRLHSPAAHIWRRNAHTAAMSD) directs the protein to the mitochondrion. Residues 35–66 (SDDSLDQGSSSSYGDSASQPHLGKGKGRQDSL) form a disordered region. Low complexity predominate over residues 40–53 (DQGSSSSYGDSASQ). Positions 83–147 (DPFEVMALDR…SSRSAFLKTG (65 aa)) constitute a J domain. The disordered stretch occupies residues 203–226 (DGSQGWRPYEDPSKGFSPPTSGPA). The region spanning 275-303 (RALAQARYEAATHGHIRREQIRRRVREAE) is the IQ domain.

The protein belongs to the DnaJ family. As to quaternary structure, interacts with QCR2.

Its subcellular location is the mitochondrion. Mitochondrial co-chaperone required for ubiquinol-cytochrome c oxidoreductase (mitochondrial respiratory chain complex III) activity. In Cryptococcus neoformans var. grubii serotype A (strain H99 / ATCC 208821 / CBS 10515 / FGSC 9487) (Filobasidiella neoformans var. grubii), this protein is Mitochondrial respiration co-chaperone MRJ1.